The chain runs to 453 residues: Chromosomal replication initiator protein DnaA (453 aa).

A domain I, interacts with DnaA modulators region spans residues 1–73 (MSKEEIWDKV…ADLIEKAIGT (73 aa)). The segment at 73 to 114 (TKLMPNFVIQEDLTEDKQVKDSAKAKSEAKPDVQAPQNSSED) is domain II. Residues 91–103 (VKDSAKAKSEAKP) show a composition bias toward basic and acidic residues. Positions 91–113 (VKDSAKAKSEAKPDVQAPQNSSE) are disordered. The segment at 115 to 331 (QFNVHNTFET…GALTRVIAYS (217 aa)) is domain III, AAA+ region. Residues glycine 159, glycine 161, lysine 162, and threonine 163 each coordinate ATP. The interval 332 to 453 (RLQNEAITTE…ENLEKEIRNQ (122 aa)) is domain IV, binds dsDNA.

Belongs to the DnaA family. As to quaternary structure, oligomerizes as a right-handed, spiral filament on DNA at oriC.

Its subcellular location is the cytoplasm. Plays an essential role in the initiation and regulation of chromosomal replication. ATP-DnaA binds to the origin of replication (oriC) to initiate formation of the DNA replication initiation complex once per cell cycle. Binds the DnaA box (a 9 base pair repeat at the origin) and separates the double-stranded (ds)DNA. Forms a right-handed helical filament on oriC DNA; dsDNA binds to the exterior of the filament while single-stranded (ss)DNA is stabiized in the filament's interior. The ATP-DnaA-oriC complex binds and stabilizes one strand of the AT-rich DNA unwinding element (DUE), permitting loading of DNA polymerase. After initiation quickly degrades to an ADP-DnaA complex that is not apt for DNA replication. Binds acidic phospholipids. This is Chromosomal replication initiator protein DnaA from Staphylococcus carnosus (strain TM300).